The sequence spans 208 residues: Calcyphosin-like protein (208 aa).

EF-hand domains are found at residues 39-74 (AGIK…YAVV), 75-110 (MEKE…PMSR), 111-146 (ARKE…KHHP), and 154-191 (SEEQ…VSAS). Ca(2+) is bound by residues aspartate 52, aspartate 54, asparagine 56, threonine 58, glutamate 63, aspartate 88, aspartate 90, asparagine 92, threonine 94, and glutamate 99.

It localises to the cytoplasm. The chain is Calcyphosin-like protein (CAPSL) from Homo sapiens (Human).